We begin with the raw amino-acid sequence, 145 residues long: uncharacterized protein (145 aa).

This sequence belongs to the asfivirus K145R family.

The protein localises to the virion. This is an uncharacterized protein from Ornithodoros (relapsing fever ticks).